An 812-amino-acid chain; its full sequence is Valine--tRNA ligase (812 aa).

Positions 46–56 (PTVSGQLHIGH) match the 'HIGH' region motif. The 'KMSKS' region signature appears at 536–540 (KMSKS). K539 serves as a coordination point for ATP.

Belongs to the class-I aminoacyl-tRNA synthetase family. ValS type 2 subfamily. In terms of assembly, monomer.

It is found in the cytoplasm. It catalyses the reaction tRNA(Val) + L-valine + ATP = L-valyl-tRNA(Val) + AMP + diphosphate. Its function is as follows. Catalyzes the attachment of valine to tRNA(Val). As ValRS can inadvertently accommodate and process structurally similar amino acids such as threonine, to avoid such errors, it has a 'posttransfer' editing activity that hydrolyzes mischarged Thr-tRNA(Val) in a tRNA-dependent manner. The chain is Valine--tRNA ligase from Rickettsia bellii (strain RML369-C).